We begin with the raw amino-acid sequence, 394 residues long: Nicotinate phosphoribosyltransferase (394 aa).

The residue at position 218 (His-218) is a Phosphohistidine; by autocatalysis.

The protein belongs to the NAPRTase family. Transiently phosphorylated on a His residue during the reaction cycle. Phosphorylation strongly increases the affinity for substrates and increases the rate of nicotinate D-ribonucleotide production. Dephosphorylation regenerates the low-affinity form of the enzyme, leading to product release.

It carries out the reaction nicotinate + 5-phospho-alpha-D-ribose 1-diphosphate + ATP + H2O = nicotinate beta-D-ribonucleotide + ADP + phosphate + diphosphate. The protein operates within cofactor biosynthesis; NAD(+) biosynthesis; nicotinate D-ribonucleotide from nicotinate: step 1/1. In terms of biological role, catalyzes the synthesis of beta-nicotinate D-ribonucleotide from nicotinate and 5-phospho-D-ribose 1-phosphate at the expense of ATP. In Xylella fastidiosa (strain Temecula1 / ATCC 700964), this protein is Nicotinate phosphoribosyltransferase.